The chain runs to 513 residues: Probable hydrolase YhcX (513 aa).

The region spanning 14–212 (MVIRNIEEKD…YATLMEWNNV (199 aa)) is the N-acetyltransferase domain. The CN hydrolase domain occupies 229–484 (VRICVIQYEM…EMVVIGDVDL (256 aa)). Glu-270 functions as the Proton acceptor in the catalytic mechanism. Lys-345 serves as the catalytic Proton donor. Cys-379 functions as the Nucleophile in the catalytic mechanism.

Belongs to the carbon-nitrogen hydrolase superfamily. NIT1/NIT2 family.

The protein is Probable hydrolase YhcX (yhcX) of Bacillus subtilis (strain 168).